Here is a 365-residue protein sequence, read N- to C-terminus: Heterogeneous nuclear ribonucleoproteins A1 homolog (365 aa).

The globular A domain stretch occupies residues 4 to 94; sequence SEAPNEPEQL…EPKRAVSRED (91 aa). RRM domains follow at residues 14–97 and 105–184; these read RKLF…DSSR and KKIF…LSKQ. Positions 95-185 are globular B domain; sequence SSRPGAHLTV…QVRKALSKQE (91 aa). Disordered stretches follow at residues 175 to 208 and 328 to 365; these read SQVRKALSKQEMASVSGSQRERGGSGNYGSRGGF and GPMKGGNYGGGRNSGPYGGGYGGGSASSSSGYGGGRRF. Gly residues-rich tracts occupy residues 198 to 208 and 330 to 365; these read GSGNYGSRGGF and MKGGNYGGGRNSGPYGGGYGGGSASSSSGYGGGRRF. Positions 321-359 are nuclear targeting sequence; that stretch reads SQSSSNFGPMKGGNYGGGRNSGPYGGGYGGGSASSSSGY.

It localises to the nucleus. It is found in the cytoplasm. In terms of biological role, this protein is a component of ribonucleosomes. This Xenopus laevis (African clawed frog) protein is Heterogeneous nuclear ribonucleoproteins A1 homolog (hnrnpa1).